A 67-amino-acid chain; its full sequence is Protein AaeX (67 aa).

The next 2 membrane-spanning stretches (helical) occupy residues 3–23 (LFPVIVIFGLSFPPIFFELLL) and 43–63 (FVWHPALFNTALYCCLFYLLS).

This sequence belongs to the AaeX family.

The protein resides in the cell membrane. In Cronobacter sakazakii (strain ATCC BAA-894) (Enterobacter sakazakii), this protein is Protein AaeX.